The following is a 79-amino-acid chain: MSYERLLCLVLVASFIAASVAQHPGDAPRMEDDSSAIQRRGLPCGCRGKSGIYWFSGKCPGGYGYTTYCSYVIGLCCVK.

The signal sequence occupies residues 1 to 21 (MSYERLLCLVLVASFIAASVA). A propeptide spanning residues 22 to 38 (QHPGDAPRMEDDSSAIQ) is cleaved from the precursor. 3 disulfides stabilise this stretch: Cys-44-Cys-76, Cys-46-Cys-69, and Cys-59-Cys-77.

The protein belongs to the sea anemone type 3 (BDS) potassium channel toxin family.

It is found in the secreted. It localises to the nematocyst. Potently and selectively inhibits voltage-gated potassium channels Kv11/KCNH/ERG. Acts as a gating-modifier toxin that shifts the voltage-dependence of ERG activation in the positive direction and suppresses its current amplitudes elicited by strong depolarizing pulses that maximally activate the channels. This chain is U-actitoxin-Bgr3d, found in Bunodosoma granuliferum (Red warty sea anemone).